The primary structure comprises 320 residues: Pyrroline-5-carboxylate reductase 2 (320 aa).

Ser2 is subject to N-acetylserine. NADP(+)-binding positions include 6-11 (IGAGQL) and Ser34. Positions 8, 10, 11, 34, 36, 56, 70, 71, and 97 each coordinate NADPH. Residues Asn56, 69-72 (AVKP), and 95-97 (CAA) contribute to the NADP(+) site. Glu164 is an L-proline binding site. NADPH is bound at residue Asn230. The L-proline site is built by Ala237 and Thr238. Over residues 295–305 (PTVSTLTPSSP) the composition is skewed to low complexity. The interval 295–320 (PTVSTLTPSSPGKLLTRSLALGGKKD) is disordered. Ser304 carries the phosphoserine modification.

Belongs to the pyrroline-5-carboxylate reductase family. In terms of assembly, homodecamer; composed of 5 homodimers. Interacts with LTO1. In terms of tissue distribution, detected in erythrocytes (at protein level). Expressed in fetal brain.

It localises to the cytoplasm. The protein localises to the mitochondrion. It carries out the reaction L-proline + NADP(+) = (S)-1-pyrroline-5-carboxylate + NADPH + 2 H(+). The catalysed reaction is L-proline + NAD(+) = (S)-1-pyrroline-5-carboxylate + NADH + 2 H(+). It participates in amino-acid biosynthesis; L-proline biosynthesis; L-proline from L-glutamate 5-semialdehyde: step 1/1. Its activity is regulated as follows. Subject to competitive inhibition by NADP. Was reported not to be inhibited by proline. However other study demonstrated an inhibition by proline. Oxidoreductase that catalyzes the last step in proline biosynthesis, which corresponds to the reduction of pyrroline-5-carboxylate to L-proline using NAD(P)H. At physiologic concentrations, has higher specific activity in the presence of NADH. Involved in cellular response to oxidative stress. In some cell types, such as erythrocytes, its primary function may be the generation of NADP(+). In Homo sapiens (Human), this protein is Pyrroline-5-carboxylate reductase 2.